The primary structure comprises 214 residues: Peroxiredoxin-5, mitochondrial (214 aa).

The N-terminal 52 residues, 1–52 (MGLAGVCALRRSAGYILVGGAGGQSAAAAARRYSEGEWASGGVRSFSRAAAA), are a transit peptide targeting the mitochondrion. The Thioredoxin domain maps to 56–214 (IKVGDAIPAV…SLAPNIISQL (159 aa)). Lysine 75 is modified (N6-acetyllysine). N6-acetyllysine; alternate is present on lysine 83. At lysine 83 the chain carries N6-succinyllysine; alternate. Cysteine 100 (cysteine sulfenic acid (-SOH) intermediate) is an active-site residue. Cysteine 100 is lipidated: S-palmitoyl cysteine. A disulfide bond links cysteine 100 and cysteine 204. Lysine 116 is modified (N6-succinyllysine). Phosphoserine occurs at positions 171 and 182. The Microbody targeting signal motif lies at 212 to 214 (SQL).

It belongs to the peroxiredoxin family. Prx5 subfamily. As to quaternary structure, monomer. S-palmitoylated. Palmitoylation occurs on the active site, inhibiting its reactivity; therefore PRDX5 palmitoylation status determines its antioxidant capacity. In terms of processing, S-palmitoylated. Depalmitoylated by ABHD10. In terms of tissue distribution, widely expressed.

Its subcellular location is the mitochondrion. The protein localises to the cytoplasm. It is found in the peroxisome matrix. The catalysed reaction is a hydroperoxide + [thioredoxin]-dithiol = an alcohol + [thioredoxin]-disulfide + H2O. Functionally, thiol-specific peroxidase that catalyzes the reduction of hydrogen peroxide and organic hydroperoxides to water and alcohols, respectively. Plays a role in cell protection against oxidative stress by detoxifying peroxides and as sensor of hydrogen peroxide-mediated signaling events. This Homo sapiens (Human) protein is Peroxiredoxin-5, mitochondrial.